The following is a 783-amino-acid chain: Lon protease (783 aa).

A Lon N-terminal domain is found at isoleucine 11 to isoleucine 203. Position 355 to 362 (glycine 355 to threonine 362) interacts with ATP. The region spanning serine 591–arginine 772 is the Lon proteolytic domain. Catalysis depends on residues serine 678 and lysine 721.

It belongs to the peptidase S16 family. In terms of assembly, homohexamer. Organized in a ring with a central cavity.

Its subcellular location is the cytoplasm. The enzyme catalyses Hydrolysis of proteins in presence of ATP.. ATP-dependent serine protease that mediates the selective degradation of mutant and abnormal proteins as well as certain short-lived regulatory proteins. Required for cellular homeostasis and for survival from DNA damage and developmental changes induced by stress. Degrades polypeptides processively to yield small peptide fragments that are 5 to 10 amino acids long. Binds to DNA in a double-stranded, site-specific manner. Regulates swarmer cell differentiation of V.parahaemolyticus. The sequence is that of Lon protease from Vibrio parahaemolyticus serotype O3:K6 (strain RIMD 2210633).